The following is a 77-amino-acid chain: Putative defensin-like protein 30 (77 aa).

Positions 1 to 26 are cleaved as a signal peptide; the sequence is MASSSKCAFLVFLCMIVLLAPSEVHA. Intrachain disulfides connect Cys43–Cys63, Cys49–Cys72, and Cys53–Cys74.

The protein belongs to the DEFL family.

It is found in the secreted. The chain is Putative defensin-like protein 30 from Arabidopsis thaliana (Mouse-ear cress).